Reading from the N-terminus, the 276-residue chain is NH(3)-dependent NAD(+) synthetase (276 aa).

43–50 (GISGGVDS) provides a ligand contact to ATP. A Mg(2+)-binding site is contributed by Asp49. Position 146 (Arg146) interacts with deamido-NAD(+). Residue Thr166 participates in ATP binding. Glu171 is a binding site for Mg(2+). Deamido-NAD(+) is bound by residues Lys179 and Asp186. Positions 195 and 217 each coordinate ATP. 266–267 (HK) contributes to the deamido-NAD(+) binding site.

The protein belongs to the NAD synthetase family. Homodimer.

The catalysed reaction is deamido-NAD(+) + NH4(+) + ATP = AMP + diphosphate + NAD(+) + H(+). Its pathway is cofactor biosynthesis; NAD(+) biosynthesis; NAD(+) from deamido-NAD(+) (ammonia route): step 1/1. In terms of biological role, catalyzes the ATP-dependent amidation of deamido-NAD to form NAD. Uses ammonia as a nitrogen source. The protein is NH(3)-dependent NAD(+) synthetase of Shewanella frigidimarina (strain NCIMB 400).